Here is a 632-residue protein sequence, read N- to C-terminus: Biosynthetic arginine decarboxylase (632 aa).

K101 carries the N6-(pyridoxal phosphate)lysine modification. 281–291 (FDVGGGLGVDY) serves as a coordination point for substrate.

The protein belongs to the Orn/Lys/Arg decarboxylase class-II family. SpeA subfamily. Mg(2+) is required as a cofactor. Pyridoxal 5'-phosphate serves as cofactor.

It catalyses the reaction L-arginine + H(+) = agmatine + CO2. Its pathway is amine and polyamine biosynthesis; agmatine biosynthesis; agmatine from L-arginine: step 1/1. Catalyzes the biosynthesis of agmatine from arginine. In Salmonella agona (strain SL483), this protein is Biosynthetic arginine decarboxylase.